We begin with the raw amino-acid sequence, 509 residues long: Histidine ammonia-lyase (509 aa).

The segment at residues 142–144 (ASG) is a cross-link (5-imidazolinone (Ala-Gly)). Position 143 is a 2,3-didehydroalanine (Ser) (S143).

It belongs to the PAL/histidase family. In terms of processing, contains an active site 4-methylidene-imidazol-5-one (MIO), which is formed autocatalytically by cyclization and dehydration of residues Ala-Ser-Gly.

The protein resides in the cytoplasm. It carries out the reaction L-histidine = trans-urocanate + NH4(+). Its pathway is amino-acid degradation; L-histidine degradation into L-glutamate; N-formimidoyl-L-glutamate from L-histidine: step 1/3. This Pseudomonas aeruginosa (strain LESB58) protein is Histidine ammonia-lyase.